Reading from the N-terminus, the 971-residue chain is Exportin-2 (971 aa).

Residues alanine 29–arginine 102 form the Importin N-terminal domain.

It belongs to the XPO2/CSE1 family.

The protein resides in the cytoplasm. It is found in the nucleus. Functionally, export receptor for importin alpha. Mediates importin-alpha re-export from the nucleus to the cytoplasm after import substrates have been released into the nucleoplasm. The protein is Exportin-2 (cse1l) of Xenopus laevis (African clawed frog).